A 353-amino-acid chain; its full sequence is MTKITNDLFLKAARKEQVDRIPVWYMRQAGRSQPEYRKLKEKYSLFEITHQPEICAYVTKLPVDQYGVDAAILYKDIMTPLPGMGVDVEIKSGIGPVIHNPIRSFQDVEKLTMFKPEIEVPYVLDTIKLLADDMLDVPLIGFAGAPFTLASYMIEGGPSKNYHQTKSFMYREPEVWAILMEKLGRMTANYLIAQINAGASAVQLFDSWVGALSRADYAEYIRPVIEMIVREVKAVHPTTPIIMQAVGASHLLAEWETMPLDVVGVDWRETITSARKKVPTKAIQGNLDPSTLLAPEKCLKEANRILQEGVLEPGYIFNLGHGVFPEVPPEMLKKLTNYIHERSEILLKKDDIK.

Substrate contacts are provided by residues 27–31, phenylalanine 46, aspartate 76, tyrosine 152, serine 207, and histidine 321; that span reads RQAGR.

This sequence belongs to the uroporphyrinogen decarboxylase family. As to quaternary structure, homodimer.

Its subcellular location is the cytoplasm. The enzyme catalyses uroporphyrinogen III + 4 H(+) = coproporphyrinogen III + 4 CO2. It participates in porphyrin-containing compound metabolism; protoporphyrin-IX biosynthesis; coproporphyrinogen-III from 5-aminolevulinate: step 4/4. In terms of biological role, catalyzes the decarboxylation of four acetate groups of uroporphyrinogen-III to yield coproporphyrinogen-III. This is Uroporphyrinogen decarboxylase from Listeria monocytogenes serotype 4b (strain F2365).